The sequence spans 272 residues: Phosphate import ATP-binding protein PstB 1 (272 aa).

The ABC transporter domain maps to 26–267 (LEIRNLDLRY…PKKRKTEDYI (242 aa)). 58–65 (GPSGCGKS) is a binding site for ATP.

Belongs to the ABC transporter superfamily. Phosphate importer (TC 3.A.1.7) family. In terms of assembly, the complex is composed of two ATP-binding proteins (PstB), two transmembrane proteins (PstC and PstA) and a solute-binding protein (PstS).

It localises to the cell inner membrane. It carries out the reaction phosphate(out) + ATP + H2O = ADP + 2 phosphate(in) + H(+). Its function is as follows. Part of the ABC transporter complex PstSACB involved in phosphate import. Responsible for energy coupling to the transport system. The chain is Phosphate import ATP-binding protein PstB 1 from Shewanella oneidensis (strain ATCC 700550 / JCM 31522 / CIP 106686 / LMG 19005 / NCIMB 14063 / MR-1).